Here is a 380-residue protein sequence, read N- to C-terminus: MYG1 exonuclease (380 aa).

Residues 1-46 constitute a mitochondrion transit peptide; it reads MGRRFLRGILTLPLRSVLQAQHRMLGSEQDPPAKRPRNNLMAPPRI. An N6-acetyllysine mark is found at Lys266 and Lys272.

It belongs to the MYG1 family. As to expression, ubiquitously expressed, with highest levels in testis.

It localises to the nucleus. The protein localises to the nucleoplasm. The protein resides in the mitochondrion matrix. Its subcellular location is the nucleolus. 3'-5' RNA exonuclease which cleaves in situ on specific transcripts in both nucleus and mitochondrion. Involved in regulating spatially segregated organellar RNA processing, acts as a coordinator of nucleo-mitochondrial crosstalk. In nucleolus, processes pre-ribosomal RNA involved in ribosome assembly and alters cytoplasmic translation. In mitochondrial matrix, processes 3'-termini of the mito-ribosomal and messenger RNAs and controls translation of mitochondrial proteins. This Mus musculus (Mouse) protein is MYG1 exonuclease.